A 344-amino-acid chain; its full sequence is S-methyl-5'-thioadenosine phosphorylase (344 aa).

Phosphate contacts are provided by residues Thr45, 88 to 89 (RH), and 121 to 122 (SA). Residue Met238 coordinates substrate. Ser239 is a phosphate binding site. Residue 262–264 (DYD) participates in substrate binding.

The protein belongs to the PNP/MTAP phosphorylase family. MTAP subfamily. In terms of assembly, homotrimer.

The protein localises to the cytoplasm. It is found in the nucleus. It carries out the reaction S-methyl-5'-thioadenosine + phosphate = 5-(methylsulfanyl)-alpha-D-ribose 1-phosphate + adenine. Its pathway is amino-acid biosynthesis; L-methionine biosynthesis via salvage pathway; S-methyl-5-thio-alpha-D-ribose 1-phosphate from S-methyl-5'-thioadenosine (phosphorylase route): step 1/1. In terms of biological role, catalyzes the reversible phosphorylation of S-methyl-5'-thioadenosine (MTA) to adenine and 5-methylthioribose-1-phosphate. Involved in the breakdown of MTA, a major by-product of polyamine biosynthesis. Responsible for the first step in the methionine salvage pathway after MTA has been generated from S-adenosylmethionine. Has broad substrate specificity with 6-aminopurine nucleosides as preferred substrates. The sequence is that of S-methyl-5'-thioadenosine phosphorylase from Candida albicans (strain SC5314 / ATCC MYA-2876) (Yeast).